Reading from the N-terminus, the 432-residue chain is MLTSTFNTTKSEEIFAAAQKLMPGGVNSPVRAFKSVGGNPIVFDRVEGAYVWDVDGNQYIDYVGSWGPAICGHAHPEVIKALHAALDKGTSFGAPCLLENVLAEMVIDGVPSIEMVRFVNSGTEACMAILRLMRAYTGREKIIKFEGCYHGHADMFLVKAGSGVATLGLPDSPGVPKSVTANTLTAPFNDLEAVKALFADHPDQIAGVILEPVVGNAGFIPPDGGFLAGLREITQEQGALLVFDEVMTGFRIAYGGAQEKFGVLPDLTTLGKIIGGGLPVGAYGGRREIMSLVAPAGPMYQAGTLSGNPLAMTAGIKTLELIRQTGTYEYLDQITAKLINGLLTIAREAGHQVCGGHISGMFGLFFTAGPVHNYEDAKKSDLAKFSAFHRGMLEQGVYLAPSQFEAGFTSLAHTEADIDRTLEAARVVLNQL.

The residue at position 272 (lysine 272) is an N6-(pyridoxal phosphate)lysine.

Belongs to the class-III pyridoxal-phosphate-dependent aminotransferase family. HemL subfamily. As to quaternary structure, homodimer. Requires pyridoxal 5'-phosphate as cofactor.

It is found in the cytoplasm. The catalysed reaction is (S)-4-amino-5-oxopentanoate = 5-aminolevulinate. It participates in porphyrin-containing compound metabolism; protoporphyrin-IX biosynthesis; 5-aminolevulinate from L-glutamyl-tRNA(Glu): step 2/2. The protein operates within porphyrin-containing compound metabolism; chlorophyll biosynthesis. In Cyanothece sp. (strain PCC 7425 / ATCC 29141), this protein is Glutamate-1-semialdehyde 2,1-aminomutase.